We begin with the raw amino-acid sequence, 164 residues long: Peptide deformylase (164 aa).

Fe cation is bound by residues cysteine 87 and histidine 129. Residue glutamate 130 is part of the active site. Histidine 133 is a binding site for Fe cation.

Belongs to the polypeptide deformylase family. Requires Fe(2+) as cofactor.

The enzyme catalyses N-terminal N-formyl-L-methionyl-[peptide] + H2O = N-terminal L-methionyl-[peptide] + formate. Functionally, removes the formyl group from the N-terminal Met of newly synthesized proteins. Requires at least a dipeptide for an efficient rate of reaction. N-terminal L-methionine is a prerequisite for activity but the enzyme has broad specificity at other positions. The sequence is that of Peptide deformylase from Thermotoga maritima (strain ATCC 43589 / DSM 3109 / JCM 10099 / NBRC 100826 / MSB8).